Here is a 123-residue protein sequence, read N- to C-terminus: Small ribosomal subunit protein uS12 (123 aa).

3-methylthioaspartic acid is present on Asp89.

The protein belongs to the universal ribosomal protein uS12 family. In terms of assembly, part of the 30S ribosomal subunit. Contacts proteins S8 and S17. May interact with IF1 in the 30S initiation complex.

With S4 and S5 plays an important role in translational accuracy. Functionally, interacts with and stabilizes bases of the 16S rRNA that are involved in tRNA selection in the A site and with the mRNA backbone. Located at the interface of the 30S and 50S subunits, it traverses the body of the 30S subunit contacting proteins on the other side and probably holding the rRNA structure together. The combined cluster of proteins S8, S12 and S17 appears to hold together the shoulder and platform of the 30S subunit. This is Small ribosomal subunit protein uS12 from Granulibacter bethesdensis (strain ATCC BAA-1260 / CGDNIH1).